Here is a 132-residue protein sequence, read N- to C-terminus: Small ribosomal subunit protein eS6 (132 aa).

The protein belongs to the eukaryotic ribosomal protein eS6 family.

The polypeptide is Small ribosomal subunit protein eS6 (Methanosphaerula palustris (strain ATCC BAA-1556 / DSM 19958 / E1-9c)).